The following is an 876-amino-acid chain: Monofunctional isopimaradiene synthase, chloroplastic (876 aa).

The transit peptide at 1–64 (MAMPSYSSLS…YLRLGSRKII (64 aa)) directs the protein to the chloroplast. Mg(2+) contacts are provided by Asp628, Asp632, Asn772, Thr776, and Glu780. Positions 628-632 (DDLYD) match the DDXXD motif motif.

It belongs to the terpene synthase family. Tpsd subfamily. Mg(2+) is required as a cofactor.

The protein localises to the plastid. The protein resides in the chloroplast. The enzyme catalyses (+)-copalyl diphosphate = isopimara-7,15-diene + diphosphate. The protein operates within terpene metabolism; oleoresin biosynthesis. In terms of biological role, involved in defensive oleoresin formation in conifers in response to insect attack or other injury. Involved in diterpene (C20) olefins biosynthesis. Monofunctional enzyme lacking the DXDD motif in the class II active site relevant for the cyclization of geranylgeranyl diphosphate (GGPP). Requires (+)-copalyl diphosphate ((+)-CPP) as substrate, but no activity with GGPP or ent-CPP. Isopimaradiene is the major products of the enzyme followed by sandaracopimaradiene. This Pinus banksiana (Jack pine) protein is Monofunctional isopimaradiene synthase, chloroplastic.